The sequence spans 136 residues: Large ribosomal subunit protein uL16c (136 aa).

Residues 1–17 show a composition bias toward basic residues; that stretch reads MLSPKRVKFRKQHRGRM. Positions 1-25 are disordered; it reads MLSPKRVKFRKQHRGRMKGISTRGN.

It belongs to the universal ribosomal protein uL16 family. Part of the 50S ribosomal subunit.

Its subcellular location is the plastid. It is found in the chloroplast. The protein is Large ribosomal subunit protein uL16c of Anthoceros angustus (Hornwort).